The chain runs to 521 residues: CD166 antigen (521 aa).

Topologically, residues glycine 1 to lysine 465 are extracellular. Residues asparagine 29, asparagine 33, asparagine 105, asparagine 203, asparagine 244, asparagine 299, asparagine 395, asparagine 418, and asparagine 437 are each glycosylated (N-linked (GlcNAc...) asparagine). The Ig-like V-type 2 domain maps to proline 63–histidine 172. The cysteines at positions 95 and 158 are disulfide-linked. Ig-like C2-type domains lie at proline 183–threonine 266, aspartate 271–threonine 347, and proline 354–serine 439. Intrachain disulfides connect cysteine 208–cysteine 251, cysteine 292–cysteine 330, and cysteine 373–cysteine 423. A helical transmembrane segment spans residues leucine 466–leucine 487. At tyrosine 488–alanine 521 the chain is on the cytoplasmic side. Positions asparagine 500–alanine 521 are disordered. Residues glutamate 507 to alanine 521 show a composition bias toward basic and acidic residues.

As to quaternary structure, homodimer. Interacts (via extracellular domain) with CD6 (via extracellular domain). Homodimerization and interaction with CD6 involve the same region and cannot occur simultaneously. The affinity for CD6 is much higher than the affinity for self-association. Interacts (via glycosylated extracellular domain) with LGALS1 and LGALS3. Interaction with LGALS1 or LGALS3 inhibits interaction with CD6. In terms of processing, glycosylated.

It localises to the cell membrane. The protein resides in the cell projection. Its subcellular location is the axon. It is found in the dendrite. In terms of biological role, cell adhesion molecule that mediates both heterotypic cell-cell contacts via its interaction with CD6, as well as homotypic cell-cell contacts. Promotes T-cell activation and proliferation via its interactions with CD6. Contributes to the formation and maturation of the immunological synapse via its interactions with CD6. Mediates homotypic interactions with cells that express ALCAM. Mediates attachment of dendritic cells onto endothelial cells via homotypic interaction. Inhibits endothelial cell migration and promotes endothelial tube formation via homotypic interactions. Required for normal organization of the lymph vessel network. Required for normal hematopoietic stem cell engraftment in the bone marrow. Plays a role in hematopoiesis; required for normal numbers of hematopoietic stem cells in bone marrow. Promotes in vitro osteoblast proliferation and differentiation. Promotes neurite extension, axon growth and axon guidance; axons grow preferentially on surfaces that contain ALCAM. Mediates outgrowth and pathfinding for retinal ganglion cell axons. This Oryctolagus cuniculus (Rabbit) protein is CD166 antigen (ALCAM).